The sequence spans 509 residues: ATP synthase subunit beta (509 aa).

The tract at residues 1–28 (MAKAATPKETAAAKKPAAPKKAASAKTA) is disordered. 187 to 194 (GGAGVGKT) is an ATP binding site.

The protein belongs to the ATPase alpha/beta chains family. In terms of assembly, F-type ATPases have 2 components, CF(1) - the catalytic core - and CF(0) - the membrane proton channel. CF(1) has five subunits: alpha(3), beta(3), gamma(1), delta(1), epsilon(1). CF(0) has three main subunits: a(1), b(2) and c(9-12). The alpha and beta chains form an alternating ring which encloses part of the gamma chain. CF(1) is attached to CF(0) by a central stalk formed by the gamma and epsilon chains, while a peripheral stalk is formed by the delta and b chains.

Its subcellular location is the cell inner membrane. It carries out the reaction ATP + H2O + 4 H(+)(in) = ADP + phosphate + 5 H(+)(out). Functionally, produces ATP from ADP in the presence of a proton gradient across the membrane. The catalytic sites are hosted primarily by the beta subunits. This is ATP synthase subunit beta from Sinorhizobium medicae (strain WSM419) (Ensifer medicae).